The following is a 150-amino-acid chain: UPF0756 membrane protein Dd1591_2981 (150 aa).

Helical transmembrane passes span 10-32, 51-71, 88-108, and 127-147; these read ILLA…AILF, YGLS…IASG, LMAV…VVLM, and ALFR…SLLI.

This sequence belongs to the UPF0756 family.

Its subcellular location is the cell membrane. The sequence is that of UPF0756 membrane protein Dd1591_2981 from Dickeya chrysanthemi (strain Ech1591) (Dickeya zeae (strain Ech1591)).